The following is a 226-amino-acid chain: Transmembrane emp24 domain-containing protein 5 (226 aa).

An N-terminal signal peptide occupies residues Met1 to Gly24. Over Phe25–Asn193 the chain is Lumenal. One can recognise a GOLD domain in the interval Lys42–Leu123. A helical membrane pass occupies residues Phe194–Leu214. Over Lys215–Thr226 the chain is Cytoplasmic. The Mediates export from ER signature appears at Leu217–Phe218.

Belongs to the EMP24/GP25L family. Interacts with TMED9 and TMED10.

It localises to the endoplasmic reticulum membrane. The protein localises to the golgi apparatus. The protein resides in the cis-Golgi network membrane. Its subcellular location is the endoplasmic reticulum-Golgi intermediate compartment membrane. Potential role in vesicular protein trafficking, mainly in the early secretory pathway. Required for the maintenance of the Golgi apparatus; involved in protein exchange between Golgi stacks during assembly. Probably not required for COPI-vesicle-mediated retrograde transport. The chain is Transmembrane emp24 domain-containing protein 5 (TMED5) from Bos taurus (Bovine).